Reading from the N-terminus, the 970-residue chain is Transcriptional activator protein DAL81 (970 aa).

3 disordered regions span residues 1-44 (MDPH…NHDI), 64-95 (NILR…QQQS), and 118-140 (DNVS…NNDI). 3 stretches are compositionally biased toward low complexity: residues 15 to 41 (TKSV…NNSN), 73 to 94 (QQQQ…QQQQ), and 121 to 140 (SNSA…NNDI). A DNA-binding region (zn(2)-C6 fungal-type) is located at residues 150–179 (CNQCRLKKTKCNYFPDLGNCLECETSRTKC). A compositionally biased stretch (low complexity) spans 807-823 (SFPNGTTSTTTPVNPTS). Positions 807–970 (SFPNGTTSTT…VTINTRETPL (164 aa)) are disordered. Composition is skewed to polar residues over residues 824–836 (RQTQ…SPAI) and 858–870 (KTSQ…TPSH). The residue at position 833 (Ser-833) is a Phosphoserine. Residues 875 to 894 (PPSNTSSPRVNSSTNVNSNT) are compositionally biased toward low complexity. The segment covering 895-906 (QMNASPLTSINE) has biased composition (polar residues). Over residues 907–938 (TRQESGDAADEKTAGRERTANEESSTELKDDN) the composition is skewed to basic and acidic residues. Composition is skewed to polar residues over residues 939–954 (PNSN…QTIK) and 961–970 (VTINTRETPL).

The protein localises to the nucleus. In terms of biological role, positive regulation of genes required for catabolism of GABA (UGA4, UGA1, and UGA2), urea (DUR1 and DUR2), arginine and allantoin. This is Transcriptional activator protein DAL81 (DAL81) from Saccharomyces cerevisiae (strain ATCC 204508 / S288c) (Baker's yeast).